Reading from the N-terminus, the 307-residue chain is Protoheme IX farnesyltransferase (307 aa).

The next 9 helical transmembrane spans lie at 29–49, 51–71, 101–120, 124–143, 151–171, 179–199, 218–238, 239–259, and 280–300; these read VISL…RGWP, LGLL…AGVF, AAIF…WVWA, AAWM…TLWL, IVLG…AVTG, FLFA…ALMI, RLTV…SVMP, VFLG…GWLL, and VAVP…VAGA.

Belongs to the UbiA prenyltransferase family. Protoheme IX farnesyltransferase subfamily.

The protein localises to the cell membrane. The catalysed reaction is heme b + (2E,6E)-farnesyl diphosphate + H2O = Fe(II)-heme o + diphosphate. The protein operates within porphyrin-containing compound metabolism; heme O biosynthesis; heme O from protoheme: step 1/1. Its function is as follows. Converts heme B (protoheme IX) to heme O by substitution of the vinyl group on carbon 2 of heme B porphyrin ring with a hydroxyethyl farnesyl side group. The protein is Protoheme IX farnesyltransferase of Deinococcus geothermalis (strain DSM 11300 / CIP 105573 / AG-3a).